The primary structure comprises 457 residues: MKIHFVGIGGIGMSAVALHEFSNGNDVYGSNIEETERTAYLRKLGIPIFVPHSADNWYDPDLVIKTPAVRDDNPEIVRARMERVPIENRLHYFRDTLKREKKEEFAVTGTDGKTTTTAMVAHVLKHLRKSPTVFLGGIMDSLEHGNYEKGNGPVVYELDESEEFFSEFSPNYLIITNARGDHLENYGNSLTRYRSAFEKISRNTDLVVTFAEDELTSHLGDVTFGVKKGTYTLEMRSASRAEQKAMVEKNGKRYLELKLKVPGFHNVLNALAVIALFDSLGYDLAPVLEALEEFRGVHRRFSIAFHDPETNIYVIDDYAHTPDEIRNLLQTAKEVFENEKIVVIFQPHRYSRLEREDGNFAKALQLADEVVVTEVYDAFEEKKNGISGKMIWDSLKSLGKEAYFVEKLPELEKVISVSENTVFLFVGAGDIIYSSRRFVERYQSSKSSPSRVLGSNK.

109–115 lines the ATP pocket; it reads GTDGKTT.

Belongs to the MurCDEF family.

The protein localises to the cytoplasm. It carries out the reaction UDP-N-acetyl-alpha-D-muramate + L-alanine + ATP = UDP-N-acetyl-alpha-D-muramoyl-L-alanine + ADP + phosphate + H(+). The protein operates within cell wall biogenesis; peptidoglycan biosynthesis. Functionally, cell wall formation. This is UDP-N-acetylmuramate--L-alanine ligase (murC) from Thermotoga maritima (strain ATCC 43589 / DSM 3109 / JCM 10099 / NBRC 100826 / MSB8).